The following is a 71-amino-acid chain: Pro-MCH (71 aa).

The N-terminal stretch at 1–20 is a signal peptide; sequence AKMSLSSYILILTLVLFSQG.

Belongs to the melanin-concentrating hormone family.

It localises to the secreted. The sequence is that of Pro-MCH (PMCH) from Carlito syrichta (Philippine tarsier).